A 239-amino-acid chain; its full sequence is Purine nucleoside phosphorylase DeoD-type (239 aa).

H5 is an a purine D-ribonucleoside binding site. Phosphate-binding positions include G21, R25, R44, and 88-91; that span reads RVGS. Residues 180 to 182 and 204 to 205 contribute to the a purine D-ribonucleoside site; these read EME and SD. Residue D205 is the Proton donor of the active site.

The protein belongs to the PNP/UDP phosphorylase family. Homohexamer; trimer of homodimers.

The enzyme catalyses a purine D-ribonucleoside + phosphate = a purine nucleobase + alpha-D-ribose 1-phosphate. It catalyses the reaction a purine 2'-deoxy-D-ribonucleoside + phosphate = a purine nucleobase + 2-deoxy-alpha-D-ribose 1-phosphate. Catalyzes the reversible phosphorolytic breakdown of the N-glycosidic bond in the beta-(deoxy)ribonucleoside molecules, with the formation of the corresponding free purine bases and pentose-1-phosphate. This chain is Purine nucleoside phosphorylase DeoD-type, found in Yersinia pseudotuberculosis serotype O:1b (strain IP 31758).